Consider the following 468-residue polypeptide: Putative FBD-associated F-box protein At5g22720 (468 aa).

The F-box domain occupies 22–68; it reads EDLISQLPDSLITQILFYLQTKKAVTTSVLSKRWRSLWLSTPGLVLI. Positions 375-433 constitute an FBD domain; it reads ELRLSFVPRCLLSSLEFVEIKGCSRSNMERVKYVGEPIETKLARYFVENSTILKKLVLP.

The sequence is that of Putative FBD-associated F-box protein At5g22720 from Arabidopsis thaliana (Mouse-ear cress).